Reading from the N-terminus, the 94-residue chain is Co-chaperonin GroES (94 aa).

This sequence belongs to the GroES chaperonin family. In terms of assembly, heptamer of 7 subunits arranged in a ring. Interacts with the chaperonin GroEL.

Its subcellular location is the cytoplasm. Functionally, together with the chaperonin GroEL, plays an essential role in assisting protein folding. The GroEL-GroES system forms a nano-cage that allows encapsulation of the non-native substrate proteins and provides a physical environment optimized to promote and accelerate protein folding. GroES binds to the apical surface of the GroEL ring, thereby capping the opening of the GroEL channel. The polypeptide is Co-chaperonin GroES (Heliobacterium modesticaldum (strain ATCC 51547 / Ice1)).